A 297-amino-acid polypeptide reads, in one-letter code: Transcriptional regulator protein Pur-beta (297 aa).

2 disordered regions span residues 1–26 and 275–297; these read MADGDSGSERGGSSGGLQHFQREQET and QERHRDKMYERREESEGEDVDDD. The residue at position 2 (Ala2) is an N-acetylalanine. The tract at residues 23–246 is DNA-binding; that stretch reads EQETQELASK…LRVSEVKPSY (224 aa). A compositionally biased stretch (basic and acidic residues) spans 275-288; sequence QERHRDKMYERREE.

The protein belongs to the PUR DNA-binding protein family.

Its subcellular location is the nucleus. In terms of biological role, transcriptional regulator which can act as an activator or a repressor. In Danio rerio (Zebrafish), this protein is Transcriptional regulator protein Pur-beta (purb).